The sequence spans 258 residues: Transmembrane O-methyltransferase homolog (258 aa).

S-adenosyl-L-methionine contacts are provided by residues Glu104, 106–107 (GT), Ser112, Glu130, and Ser160.

It belongs to the class I-like SAM-binding methyltransferase superfamily. Cation-dependent O-methyltransferase family. As to quaternary structure, interacts with LHFPL5, PCDH15, TMC1, TMC2 and TMIE. Interacts directly with TMC1. The interaction of TOMT with TMC1 and TMC2 is required for the transportation of TMC1/2 into the stereocilia of hair cells.

The protein localises to the cytoplasm. The protein resides in the endoplasmic reticulum. The catalysed reaction is a catechol + S-adenosyl-L-methionine = a guaiacol + S-adenosyl-L-homocysteine + H(+). Catalyzes the O-methylation, and thereby the inactivation, of catecholamine neurotransmitters and catechol hormones. Required for auditory function. Component of the cochlear hair cell's mechanotransduction (MET) machinery. Involved in the assembly of the asymmetric tip-link MET complex. Required for transportation of TMC1 and TMC2 proteins into the mechanically sensitive stereocilia of the hair cells. The function in MET is independent of the enzymatic activity. This is Transmembrane O-methyltransferase homolog from Rattus norvegicus (Rat).